A 399-amino-acid polypeptide reads, in one-letter code: uncharacterized protein (399 aa).

WD repeat units lie at residues 59-99 (EHKD…QICQ), 102-141 (GHKD…EFIT), 144-185 (ETVD…QVMY), 187-227 (HTAP…PECR), 241-280 (ETAA…ILAS), 283-322 (AQTE…FRKS), 324-363 (PHEQ…LLGE), and 366-399 (GHQE…DCEH).

It is found in the cytoplasm. The protein localises to the nucleus. This is an uncharacterized protein from Schizosaccharomyces pombe (strain 972 / ATCC 24843) (Fission yeast).